Consider the following 1706-residue polypeptide: Brefeldin A-inhibited guanine nucleotide-exchange protein 4 (1706 aa).

The SEC7 domain occupies 555-742 (MLEQRRAYKI…GSLYDRVVKE (188 aa)). The active site involves Glu-657.

In terms of assembly, homodimer.

It is found in the cytoplasm. It localises to the cytosol. The protein resides in the membrane. With respect to regulation, inhibited by brefeldin A. Functionally, activates the ARF proteins by exchanging bound GDP for free GTP. Plays a role in vesicular protein sorting. The chain is Brefeldin A-inhibited guanine nucleotide-exchange protein 4 (BIG4) from Arabidopsis thaliana (Mouse-ear cress).